The sequence spans 236 residues: Small ribosomal subunit protein uS3 (236 aa).

The 69-residue stretch at 39–107 (IRLYVLEELK…ETSLNIVEIH (69 aa)) folds into the KH type-2 domain.

This sequence belongs to the universal ribosomal protein uS3 family. Part of the 30S ribosomal subunit. Forms a tight complex with proteins S10 and S14.

Binds the lower part of the 30S subunit head. Binds mRNA in the 70S ribosome, positioning it for translation. This is Small ribosomal subunit protein uS3 from Bartonella quintana (strain Toulouse) (Rochalimaea quintana).